Here is a 307-residue protein sequence, read N- to C-terminus: Glycerol-3-phosphate dehydrogenase [NAD(P)+] (307 aa).

The NADPH site is built by F11, R31, and K95. Sn-glycerol 3-phosphate is bound by residues K95, G121, and S123. NADPH is bound at residue A125. Sn-glycerol 3-phosphate is bound by residues K176, D229, S239, R240, and N241. The active-site Proton acceptor is the K176. NADPH is bound at residue R240. E261 lines the NADPH pocket.

This sequence belongs to the NAD-dependent glycerol-3-phosphate dehydrogenase family.

The protein localises to the cytoplasm. It catalyses the reaction sn-glycerol 3-phosphate + NAD(+) = dihydroxyacetone phosphate + NADH + H(+). The catalysed reaction is sn-glycerol 3-phosphate + NADP(+) = dihydroxyacetone phosphate + NADPH + H(+). Its pathway is membrane lipid metabolism; glycerophospholipid metabolism. In terms of biological role, catalyzes the reduction of the glycolytic intermediate dihydroxyacetone phosphate (DHAP) to sn-glycerol 3-phosphate (G3P), the key precursor for phospholipid synthesis. This chain is Glycerol-3-phosphate dehydrogenase [NAD(P)+], found in Jannaschia sp. (strain CCS1).